The following is a 659-amino-acid chain: Siderophore transporter fer7 (659 aa).

The segment at 1-62 (MSNQAQDQPE…ADASSAREGQ (62 aa)) is disordered. Residues 31–41 (QSVSAHGNTSL) are compositionally biased toward polar residues. Asparagine 38 is a glycosylation site (N-linked (GlcNAc...) asparagine). Residues 42–54 (NKKDRVSAVRDAD) show a composition bias toward basic and acidic residues. Helical transmembrane passes span 79 to 99 (NSPI…CFAL), 121 to 141 (LFGV…PFIA), 150 to 170 (QTAY…VASA), 208 to 228 (GVVT…GNLI), 245 to 265 (GMFA…LMYV), 316 to 336 (LVGL…FSIY), 348 to 368 (IIAM…WEIL), and 379 to 399 (VWYN…FMGG). A glycan (N-linked (GlcNAc...) asparagine) is linked at asparagine 415. 2 helical membrane-spanning segments follow: residues 424 to 444 (VVNA…GFYL) and 451 to 471 (KFLQ…YLYG). Asparagine 475 carries an N-linked (GlcNAc...) asparagine glycan. 3 helical membrane passes run 478–498 (TMVV…SVVG), 528–548 (AIGS…YLAA), and 590–610 (PIFI…LLMP).

The protein belongs to the major facilitator superfamily.

It localises to the membrane. In terms of biological role, siderophore transporter; part of the gene cluster that mediates the biosynthesis of siderophore ferrichrome A which is contributing to organismal virulence. The protein is Siderophore transporter fer7 of Mycosarcoma maydis (Corn smut fungus).